A 291-amino-acid chain; its full sequence is F-box/kelch-repeat protein At5g38670 (291 aa).

An F-box domain is found at 5-51 (TNPNPSLPDDLILSCVARVSRLYYPALSLVSKSFRSLIASPELYKTR). Kelch repeat units lie at residues 46–91 (ELYK…VLDE), 92–140 (KIYV…RFDG), 142–187 (LHLV…WYTI), and 189–232 (KGDI…YGGK).

The protein is F-box/kelch-repeat protein At5g38670 of Arabidopsis thaliana (Mouse-ear cress).